Consider the following 358-residue polypeptide: MTAHIRPDLASIPAYVPGRNFPGAIKLASNETTVGPLPGVRDAVADAVANANRYPDNAAVALIEALASFLKVEPANVAAGCGSVTLCQELVQITCDQGDEVIYAWRSFEAYPVVTQVGHAVSVKVPLTEDFGHDLDAMLAAITDRTRLIFVCNPNNPTGNALSKAELESFLDAVPAHVVVALDEAYFEYSRSDADGIELFRSRPNVVVLRTFSKAYGLAGIRVGYAVADPEIIVALGKVHTPFTVSAVAQAAAIASLAAADELLARTEGVIAERTRVRTALIEAGYTVPESSANFVYLPLGELSPAFAEASTEAGILIRQYGVEGVRMTIGDPHENDAFLAFADTDVAKQAAGIGVSA.

Lysine 214 carries the N6-(pyridoxal phosphate)lysine modification.

Belongs to the class-II pyridoxal-phosphate-dependent aminotransferase family. In terms of assembly, homodimer. Pyridoxal 5'-phosphate serves as cofactor.

The catalysed reaction is an aromatic L-alpha-amino acid + 2-oxoglutarate = an aromatic oxo-acid + L-glutamate. Its function is as follows. Aminotransferase that catalyzes the conversion of aromatic amino acids and 2-oxoglutarate into corresponding aromatic oxo acids and L-glutamate. The protein is Aromatic amino acid aminotransferase of Rhodococcus erythropolis (strain PR4 / NBRC 100887).